We begin with the raw amino-acid sequence, 256 residues long: Small ribosomal subunit protein eS1 (256 aa).

Position 2 is an N-acetylalanine; partial (alanine 2).

Belongs to the eukaryotic ribosomal protein eS1 family. In terms of assembly, component of the small ribosomal subunit. Mature ribosomes consist of a small (40S) and a large (60S) subunit. The 40S subunit contains about 33 different proteins and 1 molecule of RNA (18S). The 60S subunit contains about 49 different proteins and 3 molecules of RNA (25S, 5.8S and 5S).

It is found in the cytoplasm. This chain is Small ribosomal subunit protein eS1, found in Laccaria bicolor (strain S238N-H82 / ATCC MYA-4686) (Bicoloured deceiver).